Reading from the N-terminus, the 230-residue chain is Phosphatidate cytidylyltransferase (230 aa).

The next 6 membrane-spanning stretches (helical) occupy residues 33 to 53 (FVIAILWCKPLFYILMILVGT), 67 to 87 (IPDLLIGLIIIPIPISLLIFL), 95 to 115 (WLIMLYFCIMWSVDTFAMIGG), 133 to 153 (WSGLVTGVLSAGLVAVLVSFI), 167 to 187 (IYLFIISCILALIAQLSDLFI), and 206 to 226 (HGGVLDRFDSIILTTLILFLM).

The protein belongs to the CDS family.

It is found in the cell membrane. The catalysed reaction is a 1,2-diacyl-sn-glycero-3-phosphate + CTP + H(+) = a CDP-1,2-diacyl-sn-glycerol + diphosphate. Its pathway is phospholipid metabolism; CDP-diacylglycerol biosynthesis; CDP-diacylglycerol from sn-glycerol 3-phosphate: step 3/3. The chain is Phosphatidate cytidylyltransferase (cdsA) from Rickettsia conorii (strain ATCC VR-613 / Malish 7).